The following is a 160-amino-acid chain: 6,7-dimethyl-8-ribityllumazine synthase (160 aa).

5-amino-6-(D-ribitylamino)uracil is bound by residues tryptophan 27, 59–61, and 81–83; these read AIE and VVI. 86–87 contributes to the (2S)-2-hydroxy-3-oxobutyl phosphate binding site; the sequence is QT. The active-site Proton donor is histidine 89. Asparagine 114 is a binding site for 5-amino-6-(D-ribitylamino)uracil. A (2S)-2-hydroxy-3-oxobutyl phosphate-binding site is contributed by arginine 128.

The protein belongs to the DMRL synthase family. In terms of assembly, homopentamer.

The enzyme catalyses (2S)-2-hydroxy-3-oxobutyl phosphate + 5-amino-6-(D-ribitylamino)uracil = 6,7-dimethyl-8-(1-D-ribityl)lumazine + phosphate + 2 H2O + H(+). It participates in cofactor biosynthesis; riboflavin biosynthesis; riboflavin from 2-hydroxy-3-oxobutyl phosphate and 5-amino-6-(D-ribitylamino)uracil: step 1/2. Catalyzes the formation of 6,7-dimethyl-8-ribityllumazine by condensation of 5-amino-6-(D-ribitylamino)uracil with 3,4-dihydroxy-2-butanone 4-phosphate. This is the penultimate step in the biosynthesis of riboflavin. In Mycobacterium sp. (strain JLS), this protein is 6,7-dimethyl-8-ribityllumazine synthase.